A 418-amino-acid chain; its full sequence is Elongation factor 1-gamma 1 (418 aa).

In terms of domain architecture, GST N-terminal spans 1–82 (MALVLHTFDG…YVTRSKSDNP (82 aa)). A GST C-terminal domain is found at 87-213 (SLIEYAHIEQ…GDVKQADSVP (127 aa)). Residues 211-265 (SVPQVQKKAAAPKEQKPKEAKKEAPKEAPKPKAAEKPEEEEEAPKPKPKNPLDLL) are disordered. Basic and acidic residues predominate over residues 221–246 (APKEQKPKEAKKEAPKEAPKPKAAEK). An EF-1-gamma C-terminal domain is found at 258–418 (PKNPLDLLPP…EALLDAKCFK (161 aa)).

EF-1 is composed of four subunits: alpha, beta, delta, and gamma.

In terms of biological role, probably plays a role in anchoring the complex to other cellular components. The sequence is that of Elongation factor 1-gamma 1 from Oryza sativa subsp. japonica (Rice).